The chain runs to 224 residues: Cytidylate kinase (224 aa).

13 to 21 is an ATP binding site; it reads GPSASGKGT.

The protein belongs to the cytidylate kinase family. Type 1 subfamily.

The protein localises to the cytoplasm. It catalyses the reaction CMP + ATP = CDP + ADP. The catalysed reaction is dCMP + ATP = dCDP + ADP. This chain is Cytidylate kinase, found in Nitrosomonas eutropha (strain DSM 101675 / C91 / Nm57).